The following is an 867-amino-acid chain: Cadherin-related family member 1 (867 aa).

A signal peptide spans 1 to 21; it reads MKHEWNLCPSIFFSIFHICLS. Over 22–707 the chain is Extracellular; it reads VQTNYGPYFF…SKDNPMKALG (686 aa). Cadherin domains follow at residues 39 to 138, 139 to 250, 251 to 357, 363 to 476, 477 to 580, and 572 to 692; these read NGNM…SPGF, LNTP…PPVF, VGTP…PPTF, PQNR…VPRF, SSEY…SPEF, and DIND…GPMA. The helical transmembrane segment at 708-728 threads the bilayer; sequence VLAGVMAIMVVITIFISTAMF. The Cytoplasmic segment spans residues 729–867; it reads WRNKKSNRVM…KNAGSSMSFY (139 aa). The segment at 777–825 is disordered; it reads EMESGPKNENRNNNYQGIPVPPRAPCPPPPPRLMPKVSKTERSLPTVSG. A compositionally biased stretch (pro residues) spans 795 to 809; sequence PVPPRAPCPPPPPRL.

Expressed in photoreceptor cells of the outer nuclear layer of the retina and in the pinal gland.

It localises to the membrane. Functionally, potential calcium-dependent cell-adhesion protein. The chain is Cadherin-related family member 1 (cdhr1) from Xenopus laevis (African clawed frog).